Reading from the N-terminus, the 467-residue chain is Matrix metalloproteinase-18 (467 aa).

An N-terminal signal peptide occupies residues 1–17 (MNSLLLKLLLCVAITAA). Residues 18 to 99 (FPADKQDEPP…PRCGVYDVGQ (82 aa)) constitute a propeptide that is removed on maturation. A Cysteine switch motif is present at residues 90-97 (PRCGVYDV). The Zn(2+) site is built by cysteine 92 and histidine 218. The active site involves glutamate 219. Zn(2+) is bound by residues histidine 222 and histidine 228. 4 Hemopexin repeats span residues 277-326 (PSRC…WPSL), 327-373 (PTNI…GFPK), 375-423 (VKRI…FPGI), and 424-467 (PDKI…WLGC). Residues cysteine 280 and cysteine 467 are joined by a disulfide bond.

Belongs to the peptidase M10A family. Zn(2+) is required as a cofactor. The cofactor is Ca(2+). In terms of tissue distribution, expressed only transiently in whole animal, at time when tadpole feeding begins.

The protein localises to the secreted. Its subcellular location is the extracellular space. It is found in the extracellular matrix. With respect to regulation, up-regulated in the tail by thyroid hormone. In terms of biological role, cleaves collagen type I. May play a role in larval tissue degeneration and adult organogenesis during amphibian metamorphosis. May be involved in tail resorption. The chain is Matrix metalloproteinase-18 (mmp18) from Xenopus laevis (African clawed frog).